The sequence spans 1603 residues: Pentafunctional AROM polypeptide (1603 aa).

The segment at 1–384 is 3-dehydroquinate synthase; that stretch reads MGVPTKISIL…YEPRASTVSN (384 aa). NAD(+) is bound by residues 44-46, 81-84, 114-116, and Asp119; these read DTN, ESSK, and GGV. Residue Arg130 coordinates 7-phospho-2-dehydro-3-deoxy-D-arabino-heptonate. 139–140 contacts NAD(+); sequence TT. The 7-phospho-2-dehydro-3-deoxy-D-arabino-heptonate site is built by Asp146 and Lys152. Lys161 lines the NAD(+) pocket. Asn162 is a binding site for 7-phospho-2-dehydro-3-deoxy-D-arabino-heptonate. Residues 179-182 and Asn190 each bind NAD(+); that span reads FLNT. Residue Glu194 coordinates Zn(2+). 7-phospho-2-dehydro-3-deoxy-D-arabino-heptonate is bound by residues 194–197 and Lys250; that span reads EVIK. Glu260 serves as the catalytic Proton acceptor; for 3-dehydroquinate synthase activity. Residues 264–268 and His271 contribute to the 7-phospho-2-dehydro-3-deoxy-D-arabino-heptonate site; that span reads RNLLN. His271 contacts Zn(2+). His275 acts as the Proton acceptor; for 3-dehydroquinate synthase activity in catalysis. 2 residues coordinate 7-phospho-2-dehydro-3-deoxy-D-arabino-heptonate: His287 and Lys356. His287 lines the Zn(2+) pocket. Positions 397 to 842 are EPSP synthase; sequence VYPGFPKSLN…WNTLAQTFKV (446 aa). Cys824 functions as the For EPSP synthase activity in the catalytic mechanism. Positions 872–1064 are shikimate kinase; it reads AASIFIIGMR…RRKENTFFVS (193 aa). 879 to 886 serves as a coordination point for ATP; it reads GMRGAGKT. The interval 1065-1285 is 3-dehydroquinase; sequence LTFPDLTPAS…AAPGQLSARE (221 aa). The active-site Proton acceptor; for 3-dehydroquinate dehydratase activity is His1188. The active-site Schiff-base intermediate with substrate; for 3-dehydroquinate dehydratase activity is Lys1216. The interval 1298 to 1603 is shikimate dehydrogenase; that stretch reads AKKFAVIGKP…GVSSSDDTIS (306 aa).

This sequence in the N-terminal section; belongs to the sugar phosphate cyclases superfamily. Dehydroquinate synthase family. The protein in the 2nd section; belongs to the EPSP synthase family. It in the 3rd section; belongs to the shikimate kinase family. In the 4th section; belongs to the type-I 3-dehydroquinase family. This sequence in the C-terminal section; belongs to the shikimate dehydrogenase family. In terms of assembly, homodimer. Zn(2+) serves as cofactor.

The protein localises to the cytoplasm. The enzyme catalyses 7-phospho-2-dehydro-3-deoxy-D-arabino-heptonate = 3-dehydroquinate + phosphate. It catalyses the reaction 3-dehydroquinate = 3-dehydroshikimate + H2O. The catalysed reaction is shikimate + NADP(+) = 3-dehydroshikimate + NADPH + H(+). It carries out the reaction shikimate + ATP = 3-phosphoshikimate + ADP + H(+). The enzyme catalyses 3-phosphoshikimate + phosphoenolpyruvate = 5-O-(1-carboxyvinyl)-3-phosphoshikimate + phosphate. It functions in the pathway metabolic intermediate biosynthesis; chorismate biosynthesis; chorismate from D-erythrose 4-phosphate and phosphoenolpyruvate: step 2/7. Its pathway is metabolic intermediate biosynthesis; chorismate biosynthesis; chorismate from D-erythrose 4-phosphate and phosphoenolpyruvate: step 3/7. The protein operates within metabolic intermediate biosynthesis; chorismate biosynthesis; chorismate from D-erythrose 4-phosphate and phosphoenolpyruvate: step 4/7. It participates in metabolic intermediate biosynthesis; chorismate biosynthesis; chorismate from D-erythrose 4-phosphate and phosphoenolpyruvate: step 5/7. It functions in the pathway metabolic intermediate biosynthesis; chorismate biosynthesis; chorismate from D-erythrose 4-phosphate and phosphoenolpyruvate: step 6/7. Its function is as follows. The AROM polypeptide catalyzes 5 consecutive enzymatic reactions in prechorismate polyaromatic amino acid biosynthesis. This Paracoccidioides brasiliensis (strain Pb03) protein is Pentafunctional AROM polypeptide.